The following is a 258-amino-acid chain: Imidazole glycerol phosphate synthase subunit HisF (258 aa).

Catalysis depends on residues Asp-11 and Asp-130.

Belongs to the HisA/HisF family. In terms of assembly, heterodimer of HisH and HisF.

It localises to the cytoplasm. The enzyme catalyses 5-[(5-phospho-1-deoxy-D-ribulos-1-ylimino)methylamino]-1-(5-phospho-beta-D-ribosyl)imidazole-4-carboxamide + L-glutamine = D-erythro-1-(imidazol-4-yl)glycerol 3-phosphate + 5-amino-1-(5-phospho-beta-D-ribosyl)imidazole-4-carboxamide + L-glutamate + H(+). It participates in amino-acid biosynthesis; L-histidine biosynthesis; L-histidine from 5-phospho-alpha-D-ribose 1-diphosphate: step 5/9. Its function is as follows. IGPS catalyzes the conversion of PRFAR and glutamine to IGP, AICAR and glutamate. The HisF subunit catalyzes the cyclization activity that produces IGP and AICAR from PRFAR using the ammonia provided by the HisH subunit. The chain is Imidazole glycerol phosphate synthase subunit HisF from Magnetococcus marinus (strain ATCC BAA-1437 / JCM 17883 / MC-1).